Consider the following 196-residue polypeptide: Putative NADH dehydrogenase/NAD(P)H nitroreductase SGR_2476 (196 aa).

It belongs to the nitroreductase family. HadB/RutE subfamily. The cofactor is FMN.

The protein is Putative NADH dehydrogenase/NAD(P)H nitroreductase SGR_2476 of Streptomyces griseus subsp. griseus (strain JCM 4626 / CBS 651.72 / NBRC 13350 / KCC S-0626 / ISP 5235).